We begin with the raw amino-acid sequence, 207 residues long: Guanylate kinase (207 aa).

The region spanning 4–184 (GTLYIVSAPS…ALSDLKTIIR (181 aa)) is the Guanylate kinase-like domain. 11–18 (APSGAGKS) lines the ATP pocket.

This sequence belongs to the guanylate kinase family.

The protein resides in the cytoplasm. The enzyme catalyses GMP + ATP = GDP + ADP. The catalysed reaction is dZMP + ATP = dZDP + ADP. Its pathway is purine metabolism. Essential for recycling GMP and indirectly, cGMP. Its function is as follows. (Microbial infection) Catalyzes the phosphorylation of dZMP to dZDP, when the bacterium is infected by a phage that produces the substrate for the synthesis of dZTP (2- amino-2'-deoxyadenosine 5'-triphosphate), which is then used by the phage as a DNA polymerase substrate. The polypeptide is Guanylate kinase (Salmonella choleraesuis (strain SC-B67)).